A 365-amino-acid polypeptide reads, in one-letter code: Testis-specific serine/threonine-protein kinase 1 (365 aa).

A Protein kinase domain is found at 12–272 (YIMGINLGEG…IDEILNHCWV (261 aa)). ATP contacts are provided by residues 18-26 (LGEGSYAKV) and Lys41. Asp136 (proton acceptor) is an active-site residue. A Phosphothreonine modification is found at Thr174. The disordered stretch occupies residues 282 to 365 (GAINKEGESS…HPQQPSETHT (84 aa)). The segment covering 303 to 330 (GADKKSATKLEPREEARSEARSESKPQE) has biased composition (basic and acidic residues). Over residues 331-347 (DTLQVVRQSENVGLSSE) the composition is skewed to polar residues.

It belongs to the protein kinase superfamily. CAMK Ser/Thr protein kinase family. Interacts with TSSK2. Interacts with HSP90; this interaction stabilizes TSSK1. It depends on Mg(2+) as a cofactor. In terms of processing, autophosphorylated. Ubiquitinated; HSP90 activity negatively regulates ubiquitination and degradation. As to expression, testis-specific. Expressed only in postmeiotic spermatids at the final stages of cytodifferentiation in the seminiferous tubules (at protein level). Not detected in released sperms in the lumen of the seminiferous tubules and the epididymis.

It is found in the cytoplasm. The protein resides in the cytoplasmic vesicle. It localises to the secretory vesicle. The protein localises to the acrosome. Its subcellular location is the cell projection. It is found in the cilium. The protein resides in the flagellum. It carries out the reaction L-seryl-[protein] + ATP = O-phospho-L-seryl-[protein] + ADP + H(+). The catalysed reaction is L-threonyl-[protein] + ATP = O-phospho-L-threonyl-[protein] + ADP + H(+). With respect to regulation, activated by phosphorylation on Thr-174, potentially by autophosphorylation. Its function is as follows. Testis-specific serine/threonine-protein kinase required during spermatid development. Phosphorylates 'Ser-281' of TSKS. Involved in the late stages of spermatogenesis, during the reconstruction of the cytoplasm. During spermatogenesis, required for the transformation of a ring-shaped structure around the base of the flagellum originating from the chromatoid body. This is Testis-specific serine/threonine-protein kinase 1 (Tssk1b) from Mus musculus (Mouse).